A 494-amino-acid polypeptide reads, in one-letter code: Inosine-5'-monophosphate dehydrogenase (494 aa).

2 CBS domains span residues 93 to 154 (IIRN…DEKI) and 158 to 217 (MTTN…CKDS). NAD(+) is bound by residues D251 and 301–303 (GIG). Residues G303 and G305 each contribute to the K(+) site. Position 306 (S306) interacts with IMP. Residue C308 participates in K(+) binding. The active-site Thioimidate intermediate is the C308. IMP-binding positions include 341–343 (DGG), 364–365 (GS), and 388–392 (YRGMG). The Proton acceptor role is filled by R406. E421 provides a ligand contact to IMP. Residues E475, S476, and H477 each contribute to the K(+) site.

Belongs to the IMPDH/GMPR family. Homotetramer. It depends on K(+) as a cofactor.

The enzyme catalyses IMP + NAD(+) + H2O = XMP + NADH + H(+). Its pathway is purine metabolism; XMP biosynthesis via de novo pathway; XMP from IMP: step 1/1. Mycophenolic acid (MPA) is a non-competitive inhibitor that prevents formation of the closed enzyme conformation by binding to the same site as the amobile flap. In contrast, mizoribine monophosphate (MZP) is a competitive inhibitor that induces the closed conformation. MPA is a potent inhibitor of mammalian IMPDHs but a poor inhibitor of the bacterial enzymes. MZP is a more potent inhibitor of bacterial IMPDH. Functionally, catalyzes the conversion of inosine 5'-phosphate (IMP) to xanthosine 5'-phosphate (XMP), the first committed and rate-limiting step in the de novo synthesis of guanine nucleotides, and therefore plays an important role in the regulation of cell growth. In Chlorobaculum tepidum (strain ATCC 49652 / DSM 12025 / NBRC 103806 / TLS) (Chlorobium tepidum), this protein is Inosine-5'-monophosphate dehydrogenase.